The sequence spans 365 residues: Growth-regulating factor 7 (365 aa).

Residues 59–94 (PFTNAQLKELERQAMIYKYMIASIPVPFDLLVSSPS) enclose the QLQ domain. Positions 107–151 (DLEPGRCRRTDGKKWRCAKEVVSNHKYCEKHLHRGRPRSRKHVEP) constitute a WRC domain. Short sequence motifs (bipartite nuclear localization signal) lie at residues 112–122 (RCRRTDGKKWR) and 140–147 (RGRPRSRK). Positions 137–147 (HLHRGRPRSRK) are enriched in basic residues. Disordered stretches follow at residues 137-187 (HLHR…TLEP) and 332-365 (IESY…SSQV). Residues 337–365 (LMETPTPSSSPSRVMKKMTSSVSDESSQV) show a composition bias toward polar residues.

This sequence belongs to the GRF family.

It is found in the nucleus. Its function is as follows. Transcription activator that plays a role in the regulation of cell expansion in leaf and cotyledons tissues. Component of a network formed by miR396, the GRFs and their interacting factors (GIFs) acting in the regulation of meristem function, at least partially through the control of cell proliferation. The protein is Growth-regulating factor 7 (GRF7) of Arabidopsis thaliana (Mouse-ear cress).